The following is a 48-amino-acid chain: Probable protein E5A (48 aa).

This chain is Probable protein E5A, found in Bos taurus papillomavirus 4 (Bovine papillomavirus 4).